Reading from the N-terminus, the 432-residue chain is Trigger factor (432 aa).

Residues 161–246 (EDRVTIDFTG…LKKVEERELP (86 aa)) enclose the PPIase FKBP-type domain.

Belongs to the FKBP-type PPIase family. Tig subfamily.

It is found in the cytoplasm. The catalysed reaction is [protein]-peptidylproline (omega=180) = [protein]-peptidylproline (omega=0). Its function is as follows. Involved in protein export. Acts as a chaperone by maintaining the newly synthesized protein in an open conformation. Functions as a peptidyl-prolyl cis-trans isomerase. The sequence is that of Trigger factor from Cronobacter sakazakii (strain ATCC BAA-894) (Enterobacter sakazakii).